Reading from the N-terminus, the 315-residue chain is Cytochrome c biogenesis protein CcsA (315 aa).

7 helical membrane-spanning segments follow: residues 14 to 34 (VVSL…ISFW), 72 to 92 (ISNL…AQLF), 101 to 121 (IVSA…SFVL), 146 to 166 (VIMC…GVFL), 221 to 241 (SITA…VWAN), 255 to 272 (TWAL…HTRL), and 282 to 302 (AILA…VNLL).

Belongs to the CcmF/CycK/Ccl1/NrfE/CcsA family. In terms of assembly, may interact with ccs1.

It is found in the cellular thylakoid membrane. In terms of biological role, required during biogenesis of c-type cytochromes (cytochrome c6 and cytochrome f) at the step of heme attachment. The polypeptide is Cytochrome c biogenesis protein CcsA (Prochlorococcus marinus (strain NATL1A)).